The primary structure comprises 104 residues: UPF0147 protein MK1586 (104 aa).

Belongs to the UPF0147 family.

This chain is UPF0147 protein MK1586, found in Methanopyrus kandleri (strain AV19 / DSM 6324 / JCM 9639 / NBRC 100938).